A 524-amino-acid chain; its full sequence is Cytochrome P450 monooxygenase ATR4 (524 aa).

A helical transmembrane segment spans residues 13-36 (IITYLDSLTWVGMALPLFSLCWAI). Asn-291, Asn-444, and Asn-454 each carry an N-linked (GlcNAc...) asparagine glycan.

Belongs to the cytochrome P450 family. It depends on heme as a cofactor.

It is found in the membrane. Its pathway is mycotoxin biosynthesis. In terms of biological role, cytochrome P450 monooxygenase; part of the core atranone cluster (CAC) which products are predicted to catalyze most or all steps of mycotoxin atranone synthesis, starting from geranylgeranyl pyrophosphate (GGPP). The initial cyclization of GGPP to dolabellane is probably performed by the terpene cyclase ATR13. The Baeyer-Villiger oxidation near the end of the atranone synthesis, which converts atranones D and E to atranones F and G is predicted to be catalyzed by the monooxygenase ATR8. Of the CAC's other predicted gene products, the reducing PKS ATR6 might synthesize a polyketide chain. This polyketide is probably transferred onto the atranone backbone by the polyketide transferase ATR5. Other predicted CAC products include 4 oxygenases (ATR2, ATR3, ATR4, and ATR14), 3 short-chain reductases (ATR7, ATR9, and ATR10), and a methyltransferase (ATR12). These may all be involved in the various steps of atranone biosynthesis, although their specific roles must await experimental determination. In Stachybotrys chlorohalonatus (strain IBT 40285), this protein is Cytochrome P450 monooxygenase ATR4.